The sequence spans 675 residues: Vitamin K-dependent protein S (675 aa).

The first 24 residues, 1–24 (MRVLGGRTGTLLACLALVLPVLEA), serve as a signal peptide directing secretion. Residues 25-41 (NFLSRQHASQVLIRRRR) constitute a propeptide that is removed on maturation. The region spanning 42-87 (ANTLLEETKKGNLERECIEELCNKEEAREIFENNPETEYFYPKYLG) is the Gla domain. A 4-carboxyglutamate mark is found at glutamate 47, glutamate 48, glutamate 55, glutamate 57, glutamate 60, glutamate 61, glutamate 66, glutamate 67, glutamate 70, glutamate 73, and glutamate 77. The cysteines at positions 58 and 63 are disulfide-linked. Disulfide bonds link cysteine 88/cysteine 113, cysteine 121/cysteine 134, cysteine 126/cysteine 143, cysteine 145/cysteine 154, cysteine 161/cysteine 175, cysteine 171/cysteine 184, cysteine 186/cysteine 199, cysteine 205/cysteine 217, cysteine 212/cysteine 226, cysteine 228/cysteine 241, cysteine 247/cysteine 256, cysteine 252/cysteine 265, cysteine 267/cysteine 282, cysteine 288/cysteine 567, cysteine 449/cysteine 475, and cysteine 638/cysteine 665. The segment at 88-116 (CLGSFRAGLFTAARLSTNAYPDLRSCVNA) is thrombin-sensitive. One can recognise an EGF-like 1 domain in the interval 117–155 (ISDQCNPLPCNEDGFMTCKDGQATFTCICKSGWQGEKCE). A (3R)-3-hydroxyaspartate modification is found at aspartate 136. The EGF-like 2; calcium-binding domain occupies 157–200 (DINECKDPVNINGGCSQICENTPGSYHCSCKNGFVMLSNKKDCK). Asparagine 177 is modified ((3R)-3-hydroxyasparagine). Residues 201–242 (DVDECVLKPSICGTAVCKNIPGDFECECAEGYKYNPVSKSCD) form the EGF-like 3; calcium-binding domain. The residue at position 219 (asparagine 219) is a (3R)-3-hydroxyasparagine. The 41-residue stretch at 243–283 (DVDECAENLCAQLCVNYPGGYSCYCDGKKGFKLAQDQKSCE) folds into the EGF-like 4; calcium-binding domain. A (3R)-3-hydroxyasparagine modification is found at asparagine 258. 2 Laminin G-like domains span residues 299–475 (LLYL…NKHC) and 484–665 (YYPG…AHSC). Asparagine 499 and asparagine 509 each carry an N-linked (GlcNAc...) asparagine glycan.

Post-translationally, the iron and 2-oxoglutarate dependent 3-hydroxylation of aspartate and asparagine is (R) stereospecific within EGF domains. As to expression, plasma.

The protein localises to the secreted. Its function is as follows. Anticoagulant plasma protein; it is a cofactor to activated protein C in the degradation of coagulation factors Va and VIIIa. It helps to prevent coagulation and stimulating fibrinolysis. The protein is Vitamin K-dependent protein S (PROS1) of Bos taurus (Bovine).